The chain runs to 912 residues: Eukaryotic translation initiation factor 3 subunit C (912 aa).

Residues 1–44 (MSRFFTTGSDSESESSLSGEELVTKPVGGNYGKQPLLLSEDEED) are disordered. A compositionally biased stretch (low complexity) spans 8-21 (GSDSESESSLSGEE). Residues serine 9, serine 11, serine 13, serine 15, serine 16, serine 18, and serine 39 each carry the phosphoserine modification. Lysine 99 is subject to N6-acetyllysine. Disordered regions lie at residues 157–305 (TNYK…RVRG) and 521–541 (QLTPPEGSSKSEQDQAENEGE). 4 positions are modified to phosphoserine: serine 166, serine 178, serine 181, and serine 182. Positions 166-190 (SADEDAEKNEEDSEGSSDEDEDDDG) are enriched in acidic residues. Basic and acidic residues predominate over residues 199 to 215 (KKSEAPSGDSRKFLKKE). The span at 216–229 (DEDEDSEESEDSEA) shows a compositional bias: acidic residues. Over residues 260–277 (PTTEEDKKAAEKKREDKA) the composition is skewed to basic and acidic residues. Polar residues predominate over residues 521–530 (QLTPPEGSSK). Threonine 523 carries the phosphothreonine modification. Lysine 642 is modified (N6-acetyllysine). Positions 672–848 (FHLHINLELL…QTVVMHRTEP (177 aa)) constitute a PCI domain. Residues 884–912 (FRDQKDGYRKNEGYMRRGGYRQQQSQTAY) form a disordered region. Residues 885–898 (RDQKDGYRKNEGYM) show a composition bias toward basic and acidic residues. Serine 908 is modified (phosphoserine).

The protein belongs to the eIF-3 subunit C family. Component of the eukaryotic translation initiation factor 3 (eIF-3) complex, which is composed of 13 subunits: EIF3A, EIF3B, EIF3C, EIF3D, EIF3E, EIF3F, EIF3G, EIF3H, EIF3I, EIF3J, EIF3K, EIF3L and EIF3M. The eIF-3 complex appears to include 3 stable modules: module A is composed of EIF3A, EIF3B, EIF3G and EIF3I; module B is composed of EIF3F, EIF3H, and EIF3M; and module C is composed of EIF3C, EIF3D, EIF3E, EIF3K and EIF3L. EIF3C of module C binds EIF3B of module A and EIF3H of module B, thereby linking the three modules. EIF3J is a labile subunit that binds to the eIF-3 complex via EIF3B. The eIF-3 complex interacts with RPS6KB1 under conditions of nutrient depletion. Mitogenic stimulation leads to binding and activation of a complex composed of MTOR and RPTOR, leading to phosphorylation and release of RPS6KB1 and binding of EIF4B to eIF-3. Identified in a HCV IRES-mediated translation complex, at least composed of EIF3C, IGF2BP1, RPS3 and HCV RNA-replicon. Interacts with ALKBH4, IFIT1 and IFIT2. Interacts with BZW2/5MP1. Phosphorylated. Phosphorylation is enhanced upon serum stimulation.

Its subcellular location is the cytoplasm. Functionally, component of the eukaryotic translation initiation factor 3 (eIF-3) complex, which is required for several steps in the initiation of protein synthesis. The eIF-3 complex associates with the 40S ribosome and facilitates the recruitment of eIF-1, eIF-1A, eIF-2:GTP:methionyl-tRNAi and eIF-5 to form the 43S pre-initiation complex (43S PIC). The eIF-3 complex stimulates mRNA recruitment to the 43S PIC and scanning of the mRNA for AUG recognition. The eIF-3 complex is also required for disassembly and recycling of post-termination ribosomal complexes and subsequently prevents premature joining of the 40S and 60S ribosomal subunits prior to initiation. The eIF-3 complex specifically targets and initiates translation of a subset of mRNAs involved in cell proliferation, including cell cycling, differentiation and apoptosis, and uses different modes of RNA stem-loop binding to exert either translational activation or repression. This is Eukaryotic translation initiation factor 3 subunit C from Bos taurus (Bovine).